The chain runs to 75 residues: Guanine nucleotide-binding protein G(I)/G(S)/G(O) subunit gamma-3 (75 aa).

Residue Thr5 is modified to Phosphothreonine. Residue Ser9 is modified to Phosphoserine. At Thr10 the chain carries Phosphothreonine. Ser12 is modified (phosphoserine). Cys72 carries the cysteine methyl ester modification. Cys72 is lipidated: S-geranylgeranyl cysteine. The propeptide at 73–75 is removed in mature form; that stretch reads ALL.

This sequence belongs to the G protein gamma family. In terms of assembly, g proteins are composed of 3 units, alpha, beta and gamma. Forms a complex with GNAO1 and GNB1. Interacts with SCN8A. Abundantly expressed in brain. Low levels in testis.

It localises to the cell membrane. In terms of biological role, guanine nucleotide-binding proteins (G proteins) are involved as a modulator or transducer in various transmembrane signaling systems. The beta and gamma chains are required for the GTPase activity, for replacement of GDP by GTP, and for G protein-effector interaction. The sequence is that of Guanine nucleotide-binding protein G(I)/G(S)/G(O) subunit gamma-3 (GNG3) from Bos taurus (Bovine).